The chain runs to 150 residues: Sec-independent protein translocase protein TatB (150 aa).

A helical membrane pass occupies residues 1 to 21; sequence MFDLSWSEIALVGVVALIVIG. The span at 77–86 shows a compositional bias: basic and acidic residues; that stretch reads KIDQAIDPDG. The interval 77 to 150 is disordered; that stretch reads KIDQAIDPDG…RTDGSLPPQD (74 aa). Over residues 109–135 the composition is skewed to pro residues; sequence AAPPSLPPQAPAQPVPPATGAAPPSPS.

Belongs to the TatB family. The Tat system comprises two distinct complexes: a TatABC complex, containing multiple copies of TatA, TatB and TatC subunits, and a separate TatA complex, containing only TatA subunits. Substrates initially bind to the TatABC complex, which probably triggers association of the separate TatA complex to form the active translocon.

The protein resides in the cell inner membrane. Part of the twin-arginine translocation (Tat) system that transports large folded proteins containing a characteristic twin-arginine motif in their signal peptide across membranes. Together with TatC, TatB is part of a receptor directly interacting with Tat signal peptides. TatB may form an oligomeric binding site that transiently accommodates folded Tat precursor proteins before their translocation. The protein is Sec-independent protein translocase protein TatB of Rhodospirillum rubrum (strain ATCC 11170 / ATH 1.1.1 / DSM 467 / LMG 4362 / NCIMB 8255 / S1).